A 74-amino-acid polypeptide reads, in one-letter code: uncharacterized protein (74 aa).

A coiled-coil region spans residues 25–62 (QQTIDRLAGLELRMKQLIRAIEVNNELLRTMQEQQNRV).

This is an uncharacterized protein from Bacillus subtilis (strain 168).